We begin with the raw amino-acid sequence, 148 residues long: Hemoglobin subunit beta-2 (148 aa).

One can recognise a Globin domain in the interval E3–H148. The heme b site is built by H64 and H93.

Heterotetramer of two alpha chains and two beta chains. As to expression, red blood cells.

Involved in oxygen transport from gills to the various peripheral tissues. The protein is Hemoglobin subunit beta-2 (ba2) of Danio rerio (Zebrafish).